Reading from the N-terminus, the 295-residue chain is Probable WRKY transcription factor 46 (295 aa).

A DNA-binding region (WRKY) is located at residues 98-166 (QENGSIDDGH…YLGNHTCNNI (69 aa)).

This sequence belongs to the WRKY group III family. As to quaternary structure, binds to BZR2/BES1 to cooperatively regulate the expression of target genes. In terms of processing, phosphorylated and destabilized by ASK7/BIN2. Expressed in guard cells, hypocotyls, and in the vascular tissues of cotyledon and root. Mostly expressed in roots, at lower levels in leaves and petioles, and, to a lower extent, in stems, flowers and siliques.

It localises to the nucleus. In terms of biological role, transcription factor involved in the regulation of osmotic stress responses and stomatal movement. Interacts specifically with the W box (5'-(T)TGAC[CT]-3'), a frequently occurring elicitor-responsive cis-acting element. Positive regulator of EDS1-dependent defense against E.amylovora. Together with WRKY70 and WRKY53, promotes resistance to P.syringae, probably by enhancing salicylic acid (SA)- dependent genes. Contributes to the suppression of jasmonic acid (MeJA)-induced expression of PDF1.2. Together with WRKY54 and WRKY70, promotes brassinosteroid (BR)-regulated plant growth but prevent drought response by modulating gene expression. The sequence is that of Probable WRKY transcription factor 46 (WRKY46) from Arabidopsis thaliana (Mouse-ear cress).